Here is a 312-residue protein sequence, read N- to C-terminus: Olfactory receptor 13J1 (312 aa).

Residues 1-25 (MEPLNRTEVSEFFLKGFSGYPALEH) are Extracellular-facing. N5 is a glycosylation site (N-linked (GlcNAc...) asparagine). Residues 26–46 (LLFPLCSAMYLVTLLGNTAIM) traverse the membrane as a helical segment. Residues 47–54 (AVSVLDIH) lie on the Cytoplasmic side of the membrane. The helical transmembrane segment at 55–75 (LHTPVYFFLGNLSTLDICYTP) threads the bilayer. Over 76–99 (TFVPLMLVHLLSSRKTISFAVCAI) the chain is Extracellular. C97 and C189 are oxidised to a cystine. Residues 100–120 (QMCLSLSTGSTECLLLAITAY) form a helical membrane-spanning segment. The Cytoplasmic portion of the chain corresponds to 121 to 139 (DRYLAICQPLRYHVLMSHR). A helical transmembrane segment spans residues 140 to 160 (LCVLLMGAAWVLCLLKSVTEM). Topologically, residues 161–197 (VISMRLPFCGHHVVSHFTCKILAVLKLACGNTSVSED) are extracellular. N191 is a glycosylation site (N-linked (GlcNAc...) asparagine). A helical membrane pass occupies residues 198-217 (FLLAGSILLLPVPLAFICLS). Residues 218–237 (YLLILATILRVPSAARCCKA) lie on the Cytoplasmic side of the membrane. The helical transmembrane segment at 238-258 (FSTCLAHLAVVLLFYGTIIFM) threads the bilayer. Residues 259–271 (YLKPKSKEAHISD) are Extracellular-facing. A helical membrane pass occupies residues 272–292 (EVFTVLYAMVTTMLNPTIYSL). At 293–312 (RNKEVKEAARKVWGRSRASR) the chain is on the cytoplasmic side.

This sequence belongs to the G-protein coupled receptor 1 family.

The protein localises to the cell membrane. Its function is as follows. Odorant receptor. The sequence is that of Olfactory receptor 13J1 (OR13J1) from Homo sapiens (Human).